The sequence spans 125 residues: Translation initiation factor 5A (125 aa).

Lys-35 carries the post-translational modification Hypusine.

It belongs to the eIF-5A family.

It is found in the cytoplasm. Functions by promoting the formation of the first peptide bond. The protein is Translation initiation factor 5A (eIF5A) of Methanoculleus marisnigri (strain ATCC 35101 / DSM 1498 / JR1).